Here is a 133-residue protein sequence, read N- to C-terminus: Ribosome-binding factor A (133 aa).

The protein belongs to the RbfA family. Monomer. Binds 30S ribosomal subunits, but not 50S ribosomal subunits or 70S ribosomes.

The protein localises to the cytoplasm. In terms of biological role, one of several proteins that assist in the late maturation steps of the functional core of the 30S ribosomal subunit. Associates with free 30S ribosomal subunits (but not with 30S subunits that are part of 70S ribosomes or polysomes). Required for efficient processing of 16S rRNA. May interact with the 5'-terminal helix region of 16S rRNA. The chain is Ribosome-binding factor A from Proteus mirabilis (strain HI4320).